An 89-amino-acid chain; its full sequence is Large ribosomal subunit protein eL34 (89 aa).

The protein belongs to the eukaryotic ribosomal protein eL34 family.

The polypeptide is Large ribosomal subunit protein eL34 (Methanococcus vannielii (strain ATCC 35089 / DSM 1224 / JCM 13029 / OCM 148 / SB)).